Here is a 1190-residue protein sequence, read N- to C-terminus: Laminin subunit gamma-2 (1190 aa).

The N-terminal stretch at 1–21 (MPALWLRCGLCLALLLPAARA) is a signal peptide. Cystine bridges form between C28-C37, C30-C53, C56-C65, C68-C81, C84-C96, C86-C102, C104-C113, C116-C128, C139-C150, C141-C155, C157-C166, and C169-C184. Laminin EGF-like domains are found at residues 28 to 83 (CDCN…RCLP), 84 to 130 (CNCN…GCAQ), and 139 to 186 (CDCD…GCTQ). In terms of domain architecture, Laminin EGF-like 4; first part spans 187–196 (CFCYGHSASC). A Laminin IV type A domain is found at 213–381 (QDVDGWKAVQ…SGAPAPWVEQ (169 aa)). N342 and N362 each carry an N-linked (GlcNAc...) asparagine glycan. The Laminin EGF-like 4; second part domain maps to 382–415 (CVCPVGYKGQFCQDCASGYKRDSARLGPFGTCIP). Laminin EGF-like domains are found at residues 416-462 (CNCQ…SCKP), 463-517 (CPCR…PCQP), and 518-573 (CQCN…KCRA). 11 cysteine pairs are disulfide-bonded: C463/C471, C465/C482, C485/C494, C497/C515, C518/C532, C520/C539, C542/C551, C554/C571, C574/C586, C576/C592, and C594/C603. The Laminin EGF-like 8; truncated domain maps to 574–603 (CNCNPVGSEPVECRSDGSCVCKPGFGGLSC). The interval 604 to 1190 (EHAALTSCPA…CYNTQALEQQ (587 aa)) is domain II and I. Residues 613-718 (ACYNQVKVQM…GSQYQNQVQD (106 aa)) adopt a coiled-coil conformation. S803 is a glycosylation site (O-linked (Xyl...) (chondroitin sulfate) serine). Coiled coils occupy residues 809-1073 (AVVQ…AVQM) and 1114-1190 (EERL…LEQQ). N939 and N1030 each carry an N-linked (GlcNAc...) asparagine glycan.

In terms of assembly, laminin is a complex glycoprotein, consisting of three different polypeptide chains (alpha, beta, gamma), which are bound to each other by disulfide bonds into a cross-shaped molecule comprising one long and three short arms with globules at each end. Gamma-2 is a subunit of laminin-5 (laminin-332 or epiligrin/kalinin/nicein). In terms of processing, O-glycosylated; contains chondroitin sulfate (CS).

It localises to the secreted. The protein resides in the extracellular space. It is found in the extracellular matrix. Its subcellular location is the basement membrane. Binding to cells via a high affinity receptor, laminin is thought to mediate the attachment, migration and organization of cells into tissues during embryonic development by interacting with other extracellular matrix components. Ladsin exerts cell-scattering activity toward a wide variety of cells, including epithelial, endothelial, and fibroblastic cells. This chain is Laminin subunit gamma-2 (LAMC2), found in Equus caballus (Horse).